The following is a 257-amino-acid chain: 24 kDa outer membrane protein (257 aa).

An N-terminal signal peptide occupies residues 1-21 (MKNKSKLLACCLMALPISSFS).

The protein belongs to the MipA/OmpV family.

The protein resides in the cell outer membrane. The polypeptide is 24 kDa outer membrane protein (Pasteurella multocida (strain Pm70)).